Consider the following 289-residue polypeptide: MVPELQKSTVRIQQPERVMGVIRAIKEQGCSKLQVISDFDMTLSRFGCNGRRCPTSHNILDNSHVISEDGKKKLKDLLHHYYPIEIDPNRTLEEKRPLMVEWWTRAHELLSQQKIQKGDIAQIVRESDVMLRDGFNELFDQLHKYSVPMFIFSAGVGDVLEEIIRQANVFYPNVNVVSNYMDFDDSGVLKCFKSPLIHTYNKNNSVLQGTAYFQQLSTRTSIILLGDSMGDLTMADGVPSVENILKIGFLNDKVEEQRGRYLDAYDIVLESDETLDVVNGILRYILMET.

D38 acts as the Nucleophile in catalysis. Mg(2+)-binding residues include D38 and D40. D40 serves as the catalytic Proton donor. E85 is a binding site for CMP. E85 lines the N(7)-methyl-GMP pocket. Residues 153 to 154 and K202 each bind substrate; that span reads SA. Position 227 (D227) interacts with Mg(2+).

It belongs to the pyrimidine 5'-nucleotidase family. Monomer.

It is found in the cytoplasm. The catalysed reaction is N(7)-methyl-GMP + H2O = N(7)-methylguanosine + phosphate. The enzyme catalyses CMP + H2O = cytidine + phosphate. It carries out the reaction a ribonucleoside 5'-phosphate + H2O = a ribonucleoside + phosphate. In terms of biological role, specifically hydrolyzes 7-methylguanosine monophosphate (m(7)GMP) to 7-methylguanosine and inorganic phosphate. The specific activity for m(7)GMP may protect cells against undesired salvage of m(7)GMP and its incorporation into nucleic acids. Also has weak activity for CMP. UMP and purine nucleotides are poor substrates. This is 7-methylguanosine phosphate-specific 5'-nucleotidase (NT5C3B) from Gallus gallus (Chicken).